A 465-amino-acid chain; its full sequence is UDP-N-acetylmuramoylalanine--D-glutamate ligase (465 aa).

ATP is bound at residue 127–133 (GSNGKST).

The protein belongs to the MurCDEF family.

The protein resides in the cytoplasm. The enzyme catalyses UDP-N-acetyl-alpha-D-muramoyl-L-alanine + D-glutamate + ATP = UDP-N-acetyl-alpha-D-muramoyl-L-alanyl-D-glutamate + ADP + phosphate + H(+). Its pathway is cell wall biogenesis; peptidoglycan biosynthesis. In terms of biological role, cell wall formation. Catalyzes the addition of glutamate to the nucleotide precursor UDP-N-acetylmuramoyl-L-alanine (UMA). The chain is UDP-N-acetylmuramoylalanine--D-glutamate ligase from Cereibacter sphaeroides (strain ATCC 17025 / ATH 2.4.3) (Rhodobacter sphaeroides).